The chain runs to 220 residues: Ribosomal RNA small subunit methyltransferase J (220 aa).

Residues 55–56 (RD), 71–72 (ER), and aspartate 123 contribute to the S-adenosyl-L-methionine site.

Belongs to the methyltransferase superfamily. RsmJ family.

It localises to the cytoplasm. It catalyses the reaction guanosine(1516) in 16S rRNA + S-adenosyl-L-methionine = N(2)-methylguanosine(1516) in 16S rRNA + S-adenosyl-L-homocysteine + H(+). In terms of biological role, specifically methylates the guanosine in position 1516 of 16S rRNA. The sequence is that of Ribosomal RNA small subunit methyltransferase J from Rhodopseudomonas palustris (strain BisB5).